Here is a 679-residue protein sequence, read N- to C-terminus: Methyl-accepting chemotaxis protein McpB (679 aa).

3 divergent domain HAMP regions span residues 8–56, 63–112, and 111–156; these read AVAQ…RQLR, QQVE…AAHI, and HIAV…ERLR. The region spanning 171–213 is the PAS domain; sequence YNARIKSALDNVSANVMIADNDLNIIYMNRTVSEMLGRAEADI. Residue His-234 coordinates heme. Residues 285–287 carry the DxT. Important for signal propagation motif; it reads DRT. Residues 289–332 form a divergent domain HAMP 4 region; the sequence is EHRAEQEVSQLVQAAAAGDFSKRVEEAGKEGFFLRLAKDLNSLV. Positions 333–385 constitute an HAMP 5 domain; it reads DTADRGLRDVSRMLGALAQGDLTQRIEADYQGTFGQLKDFSNDTAQSLSRMLG. The 230-residue stretch at 390–619 folds into the Methyl-accepting transducer domain; that stretch reads AADTINTAAS…EAAAAAEAMQ (230 aa). 2 disordered regions span residues 405 to 425 and 644 to 679; these read NAEL…TASS and ASAR…WEEF. Residues 411–425 are compositionally biased toward polar residues; the sequence is RTEQQASSLEETASS. Over residues 670–679 the composition is skewed to basic and acidic residues; sequence ARKEDGWEEF. The GWEEF pentapeptide. Important for methylation by CheR2 motif lies at 675 to 679; sequence GWEEF.

This sequence belongs to the methyl-accepting chemotaxis (MCP) protein family. In terms of assembly, homodimer. The PAS domains form dimers in the presence and absence of oxygen. Interacts with the methyltransferase CheR2 via the C-terminal McpB pentapeptide GWEEF. Interacts with the methylesterase/gutaminase CheB2, which also binds to the GWEEF pentapeptide. Post-translationally, methylated by CheR2, but not by CheR1, CheR3 or WspC. Demethylated by CheB2. In vitro, can be methylated by E.coli CheR.

The protein resides in the cytoplasm. Its function is as follows. Chemoreceptor that plays a critical role in the virulence and pathogenesis of P.aeruginosa in a variety of hosts. Probably acts through oxygen sensing. Uses a heme-based sensor. Could be involved in chemotaxis. When expressed in E.coli, is able to sense and mediate repellent responses to oxygen, carbon monoxide and nitric oxide. This chain is Methyl-accepting chemotaxis protein McpB, found in Pseudomonas aeruginosa (strain ATCC 15692 / DSM 22644 / CIP 104116 / JCM 14847 / LMG 12228 / 1C / PRS 101 / PAO1).